The chain runs to 2069 residues: Dedicator of cytokinesis protein 9 (2069 aa).

Phosphoserine is present on residues S21, S32, S167, and S170. The PH domain occupies 174 to 281 (GITKHGWLYK…WITILNKILQ (108 aa)). The segment at 290–313 (EKRNGDSHEDDEQSKLEGSGSGLD) is disordered. A phosphoserine mark is found at S433 and S443. The C2 DOCK-type domain occupies 640–818 (TNHLYVYPKY…PLLKISTHLV (179 aa)). Phosphoserine occurs at positions 927 and 1235. Position 1241 is a phosphothreonine (T1241). The segment at 1241-1282 (TPNINSVRNADSRGSLISTDSGNSLPERNSEKSNSLDKHQQS) is disordered. S1255, S1261, and S1264 each carry phosphoserine. Polar residues predominate over residues 1255–1267 (SLISTDSGNSLPE). A compositionally biased stretch (basic and acidic residues) spans 1268–1280 (RNSEKSNSLDKHQ). A DOCKER domain is found at 1605–2069 (KSYASTPELR…LSEIMHEQLG (465 aa)). An interaction with CDC42 region spans residues 1693-2069 (DEEASMMEDV…LSEIMHEQLG (377 aa)). 2 coiled-coil regions span residues 1948-1982 (IEVAIDEMSKKVAELRQLCSSAEVDMIKLQLKLQG) and 2034-2067 (NERLIKEDQLEYQEEMKANYREMAKELSEIMHEQ).

The protein belongs to the DOCK family. Homodimer. Interacts preferentially with nucleotide-depleted CDC42. As to expression, widely expressed, with highest expression in heart and placenta. Expressed at intermediate level in kidney, brain, lung and skeletal muscle.

It localises to the endomembrane system. Functionally, guanine nucleotide-exchange factor (GEF) that activates CDC42 by exchanging bound GDP for free GTP. Overexpression induces filopodia formation. This chain is Dedicator of cytokinesis protein 9, found in Homo sapiens (Human).